The primary structure comprises 1036 residues: Vacuolar basic amino acid transporter VSB1 (1036 aa).

The Vacuolar segment spans residues 1 to 213 (MGRTIRRRRS…SKFAHYLPAA (213 aa)). 2 positions are modified to phosphoserine: Ser42 and Ser127. Thr130 carries the post-translational modification Phosphothreonine. 5 positions are modified to phosphoserine: Ser140, Ser144, Ser149, Ser152, and Ser153. The chain crosses the membrane as a helical span at residues 214-234 (VLGLLLNILDALSYGMIIFPI). Residues 235 to 236 (TE) are Cytoplasmic-facing. A helical transmembrane segment spans residues 237-257 (PVFSHLGPTGISMFYISTIIS). Residues 258 to 269 (QAVYSGGWSSFP) are Vacuolar-facing. The helical transmembrane segment at 270–290 (SGIGSEMIEITPFYHTMALAI) threads the bilayer. The Cytoplasmic segment spans residues 291-300 (KEALAGNDDE). A helical transmembrane segment spans residues 301–321 (IITTTIFCYVISSMLTGVVFY). Residues 322-338 (ALGKLRLGKIVGFFPRH) are Vacuolar-facing. The helical transmembrane segment at 339–359 (ILIGCIGGVGYFLIITGIEVT) threads the bilayer. Residues 360-375 (TRVAKFEYSWPFFSGL) are Cytoplasmic-facing. A helical transmembrane segment spans residues 376–396 (FTDYDTLAKWLLPVLLTVVLI). Residues 397–405 (GTQRYFKNS) are Vacuolar-facing. Residues 406–426 (LVLPSFYILTLVLFHFIVAII) traverse the membrane as a helical segment. The Cytoplasmic segment spans residues 427-473 (PTLSLDALRQAGWIFPIANSDSKWYDHYRLFNVHKVHWSLVLQQIPT). A helical membrane pass occupies residues 474 to 494 (MMALTFFGILHVPINVPALAM). Over 495–515 (SLQMDKYDVDRELIAHGYSNF) the chain is Vacuolar. Residues 516–536 (FSGLLGSVQNYLVYTNSVLFI) traverse the membrane as a helical segment. At 537–546 (RAGADSPFAG) the chain is on the cytoplasmic side. A helical membrane pass occupies residues 547–567 (FLLIALTICIMIIGPVIISFI). A topological domain (vacuolar) is located at residue Pro568. The helical transmembrane segment at 569–589 (ICIVGSLIFLLGYELLVEALV) threads the bilayer. At 590 to 604 (DTWNKLNRFEYLTVV) the chain is on the cytoplasmic side. Residues 605 to 625 (IIVFTMGIFDFVLGIIVGILI) traverse the membrane as a helical segment. Residues 626 to 664 (ACFSFLVDSTKLQTINGEYNGNVARSTVYRDYVQTKFLD) lie on the Vacuolar side of the membrane. The STAS domain occupies 660–781 (TKFLDGIGEQ…ADLNSALEWC (122 aa)). The helical transmembrane segment at 665–685 (GIGEQIYVLKLQNLLFFGTII) threads the bilayer. Residues 686–1036 (SIEEKIERLL…ELLGYTLVSA (351 aa)) lie on the Cytoplasmic side of the membrane. Ser842 is modified (phosphoserine). Phosphothreonine is present on Thr847.

Its subcellular location is the vacuole membrane. Functionally, amino acid transporter involved in vacuolar uptake of basic amino acids for storage during nitrogen replete condititions. May function as an amino acid/proton antiporter. The sequence is that of Vacuolar basic amino acid transporter VSB1 from Saccharomyces cerevisiae (strain ATCC 204508 / S288c) (Baker's yeast).